The primary structure comprises 377 residues: Probable dehydratase NIT22 (377 aa).

NADP(+)-binding residues include lysine 101 and arginine 196. The segment at 220–243 (ERGPKMNEHVPSTPPRRPDAVSSF) is disordered. In terms of domain architecture, MaoC-like spans 233–332 (PPRRPDAVSS…ILMWDMGLCK (100 aa)). NADP(+) is bound by residues threonine 265 and isoleucine 287.

The protein belongs to the short-chain dehydrogenases/reductases (SDR) family.

It functions in the pathway siderophore biosynthesis. In terms of biological role, probable dehydratase; part of the gene cluster that mediates the biosynthesis of hydroxamate-containing siderophores that play a critical role in virulence via intracellular iron acquisition during macrophage infection. The protein is Probable dehydratase NIT22 of Ajellomyces capsulatus (Darling's disease fungus).